A 69-amino-acid chain; its full sequence is uncharacterized protein (69 aa).

An HTH cro/C1-type domain is found at 10 to 64 (IRAFRKLKGYTQEGFAKALGISVSILGEIERGNRLPSAAIIQDAADVLNISADEL). The segment at residues 21–40 (QEGFAKALGISVSILGEIER) is a DNA-binding region (H-T-H motif).

This is an uncharacterized protein from Bacillus subtilis (strain 168).